A 664-amino-acid polypeptide reads, in one-letter code: Cyclic nucleotide-gated channel alpha-2 (664 aa).

Residues 1–10 (MMTEKSNGVK) show a composition bias toward polar residues. The interval 1 to 61 (MMTEKSNGVK…LQRLAEMDTP (61 aa)) is disordered. Topologically, residues 1 to 146 (MMTEKSNGVK…PAGDWYYRWL (146 aa)) are cytoplasmic. Residues 147-168 (FVIAMPVLYNWCLLVARACFSD) traverse the membrane as a helical segment. The Extracellular segment spans residues 169–178 (LQRNYFVVWL). Residues 179 to 199 (VLDYFSDTVYIADLIIRLRTG) traverse the membrane as a helical segment. Residues 200-224 (FLEQGLLVKDPKKLRDNYIHTLQFK) lie on the Cytoplasmic side of the membrane. Residues 225-243 (LDVASIIPTDLIYFAVGIH) form a helical membrane-spanning segment. Topologically, residues 244–248 (SPEVR) are extracellular. A helical membrane pass occupies residues 249–267 (FNRLLHFARMFEFFDRTET). Residues 268-274 (RTSYPNI) are Cytoplasmic-facing. The interval 272 to 380 (PNIFRISNLV…GNVGSMISNM (109 aa)) is ion conduction pathway. A helical membrane pass occupies residues 275 to 298 (FRISNLVLYILVIIHWNACIYYAI). At 299–321 (SKSIGFGVDTWVYPNITDPEYGY) the chain is on the extracellular side. Helical transmembrane passes span 322 to 356 (LARE…LFVI) and 357 to 381 (FDFL…SNMN). Positions 339 to 342 (TIGE) are selectivity filter. The tract at residues 382 to 458 (ATRAEFQAKI…STLKKVRIFQ (77 aa)) is C-linker. Residues 382-664 (ATRAEFQAKI…INTPEPAVAE (283 aa)) lie on the Cytoplasmic side of the membrane. The interval 462-582 (AGLLVELVLK…EERGREILMK (121 aa)) is cyclic nucleotide-binding domain. 4 residues coordinate 3',5'-cyclic GMP: glycine 522, serine 525, arginine 538, and threonine 539. Residues arginine 538 and threonine 539 each coordinate 3',5'-cyclic AMP. The stretch at 599-653 (VQEKLEQLETNMETLYTRFARLLAEYTGAQQKLKQRITVLETKMKQNHEDDYLSD) forms a coiled coil.

The protein belongs to the cyclic nucleotide-gated cation channel (TC 1.A.1.5) family. CNGA2 subfamily. In terms of assembly, the olfactory cyclic nucleotide-gated channel is an heterotetramer composed of CNGA2, CNGA4 and CNGB1b subunits with 2:1:1 stoichiometry.

It is found in the cell projection. Its subcellular location is the cilium membrane. It catalyses the reaction Ca(2+)(in) = Ca(2+)(out). The catalysed reaction is Na(+)(in) = Na(+)(out). The enzyme catalyses K(+)(in) = K(+)(out). It carries out the reaction NH4(+)(in) = NH4(+)(out). It catalyses the reaction Rb(+)(in) = Rb(+)(out). The catalysed reaction is Li(+)(in) = Li(+)(out). The enzyme catalyses Cs(+)(in) = Cs(+)(out). Pore-forming subunit of the olfactory cyclic nucleotide-gated channel. Operates in the cilia of olfactory sensory neurons where chemical stimulation of the odorant is converted to an electrical signal. Mediates odorant-induced cAMP-dependent Ca(2+) influx triggering neuron depolarization. The rise of intracellular Ca(2+) levels potentiates the olfactory response by activating Ca(2+)-dependent Cl(-) channels, but it also serves as a negative feedback signal to desensitize the channel for rapid adaptation to odorants. Conducts cAMP- and cGMP-gated ion currents, with permeability for monovalent and divalent cations. The protein is Cyclic nucleotide-gated channel alpha-2 of Mus musculus (Mouse).